A 1535-amino-acid polypeptide reads, in one-letter code: CLIP-associating protein 1 (1535 aa).

HEAT repeat units lie at residues Ala-87–Asn-124 and Leu-163–Glu-200. The segment at Asn-237 to Ala-290 is disordered. Phosphoserine is present on Ser-246. A compositionally biased stretch (low complexity) spans Pro-252–Ser-266. The segment covering Arg-267 to Met-279 has biased composition (polar residues). Over residues Ser-280–Ala-290 the composition is skewed to low complexity. 2 HEAT repeats span residues His-405 to Thr-440 and His-441 to Thr-477. Disordered regions lie at residues Ser-543 to Ser-600 and Ser-612 to Pro-782. Ser-545, Ser-548, Ser-558, Ser-559, and Ser-568 each carry phosphoserine. Low complexity predominate over residues Ser-548–Leu-567. The span at Ser-579–Ser-594 shows a compositional bias: low complexity. Residue Ser-600 is modified to Phosphoserine. The span at Ser-612–Ser-633 shows a compositional bias: low complexity. 4 positions are modified to phosphoserine: Ser-636, Ser-646, Ser-647, and Ser-649. The segment covering Gln-645–Asp-658 has biased composition (polar residues). Thr-656 bears the Phosphothreonine mark. An interaction with microtubules, MAPRE1 and MAPRE3 region spans residues Arg-662–Pro-782. Residues Arg-673–Ser-695 show a composition bias toward low complexity. Phosphoserine is present on residues Ser-684, Ser-688, Ser-695, and Ser-702. Position 708 is a phosphothreonine (Thr-708). Ser-711 carries the phosphoserine modification. Positions Gln-721 to Asn-730 are enriched in polar residues. Phosphoserine occurs at positions 784, 794, and 820. One copy of the HEAT 5 repeat lies at Gln-971–Pro-1008. The disordered stretch occupies residues Leu-1078–Ser-1157. The segment covering Lys-1079–Gly-1094 has biased composition (polar residues). The residue at position 1088 (Ser-1088) is a Phosphoserine. A phosphothreonine mark is found at Thr-1092 and Thr-1096. Positions Ser-1103–Thr-1112 are enriched in low complexity. A phosphoserine mark is found at Ser-1110, Phe-1139, and Ser-1193. The span at Pro-1200–Ser-1213 shows a compositional bias: basic and acidic residues. Disordered regions lie at residues Pro-1200–Gly-1233 and Leu-1245–Tyr-1266. Residue Ser-1220 is modified to Phosphoserine. The interaction with CLIP2 and RSN stretch occupies residues Arg-1251–Ser-1535. The segment at Arg-1251–Ser-1535 is interaction with PHLDB2. The interval Phe-1253–Ser-1535 is localization to kinetochores. Residues Asp-1296–Lys-1327 adopt a coiled-coil conformation. HEAT repeat units follow at residues Glu-1339 to Ala-1376 and Gln-1457 to Glu-1494.

The protein belongs to the CLASP family. Interacts with ERC1, MAPRE1, MAPRE3, microtubules, and PHLDB2. The interaction with ERC1 may be mediated by PHLDB2. Interacts with GCC2; recruits CLASP1 to Golgi membranes. Interacts with CLIP2 and RSN. Interacts with MACF1. Interacts with mtcl2 and MTCL1. As to expression, highly expressed in brain and heart and at lower levels in kidney, lung, skeletal muscle and testis.

Its subcellular location is the cytoplasm. The protein resides in the cytoskeleton. The protein localises to the microtubule organizing center. It is found in the centrosome. It localises to the chromosome. Its subcellular location is the centromere. The protein resides in the kinetochore. The protein localises to the spindle. It is found in the golgi apparatus. It localises to the trans-Golgi network. Functionally, microtubule plus-end tracking protein that promotes the stabilization of dynamic microtubules. Involved in the nucleation of noncentrosomal microtubules originating from the trans-Golgi network (TGN). Required for the polarization of the cytoplasmic microtubule arrays in migrating cells towards the leading edge of the cell. May act at the cell cortex to enhance the frequency of rescue of depolymerizing microtubules by attaching their plus-ends to cortical platforms composed of ERC1 and PHLDB2. This cortical microtubule stabilizing activity is regulated at least in part by phosphatidylinositol 3-kinase signaling. Also performs a similar stabilizing function at the kinetochore which is essential for the bipolar alignment of chromosomes on the mitotic spindle. The protein is CLIP-associating protein 1 (Clasp1) of Mus musculus (Mouse).